Consider the following 475-residue polypeptide: ATP synthase subunit beta (475 aa).

155–162 contributes to the ATP binding site; that stretch reads GGAGVGKT.

Belongs to the ATPase alpha/beta chains family. F-type ATPases have 2 components, CF(1) - the catalytic core - and CF(0) - the membrane proton channel. CF(1) has five subunits: alpha(3), beta(3), gamma(1), delta(1), epsilon(1). CF(0) has three main subunits: a(1), b(2) and c(9-12). The alpha and beta chains form an alternating ring which encloses part of the gamma chain. CF(1) is attached to CF(0) by a central stalk formed by the gamma and epsilon chains, while a peripheral stalk is formed by the delta and b chains.

The protein localises to the cell inner membrane. It carries out the reaction ATP + H2O + 4 H(+)(in) = ADP + phosphate + 5 H(+)(out). Its function is as follows. Produces ATP from ADP in the presence of a proton gradient across the membrane. The catalytic sites are hosted primarily by the beta subunits. The chain is ATP synthase subunit beta from Rhizobium etli (strain CIAT 652).